Reading from the N-terminus, the 134-residue chain is Putative pre-16S rRNA nuclease (134 aa).

This sequence belongs to the YqgF nuclease family.

Its subcellular location is the cytoplasm. Its function is as follows. Could be a nuclease involved in processing of the 5'-end of pre-16S rRNA. This Hydrogenovibrio crunogenus (strain DSM 25203 / XCL-2) (Thiomicrospira crunogena) protein is Putative pre-16S rRNA nuclease.